A 558-amino-acid chain; its full sequence is MLLNLPYEILLIIFSLIESKKFFKLLSINKEVREFILTMLNQNPKSFSFNLKNCNPKDSIKYLQSVRCLNLSKSTINDDQLKYLSDVYSLNISNCKSITDRGLSFLTQVVKLNVSYNGNITDNGLKNFQRIKKINLCFCGKITDKGIENLVYGKTLNSDEPIPTVINTIRKINLQCCMRITSKCLQHLRRARSINMLYGPQTYNEDLQYIPNIETLKIDGLDVSDKNLTNLKYVKYIFFGRNYPVIFMSHLDKLTKLILPNVPEHIEYIDFNKMPNLVKADLSGCINLLDEQLKGLSKVRKLNLKECYDITDVGLSYLTMVKKINISYCFRITDSGLKYLSNADYVNICGCLKITNEGFFYLKKVPKLVVGYTTLSLYDCMIDGCGDYEYLTISDNTKQLITGKAFHYLENTSQIKIINCNNIIDVDLKSFTNLPTLSKIDLRYCNNITNQGLSALCNIPIVKISNNYQISSKGISYLTNSKKISIESCPKINSFPNLTGLKKLVFKTMGKINMQLIQNLNEYYHIDTIHVYYRDFIDRQHLSSIKINDNIHFISDKF.

An F-box domain is found at 1–47; sequence MLLNLPYEILLIIFSLIESKKFFKLLSINKEVREFILTMLNQNPKSF. LRR repeat units follow at residues 73 to 105, 139 to 176, 177 to 220, 251 to 284, 285 to 317, 329 to 361, 369 to 395, 420 to 444, 445 to 477, and 481 to 508; these read KSTI…GLSF, CGKI…NLQC, CMRI…KIDG, LDKL…DLSG, CINL…GLSY, CFRI…GFFY, VVGY…TISD, CNNI…DLRY, CNNI…GISY, and SKKI…VFKT.

This Acanthamoeba polyphaga mimivirus (APMV) protein is Putative F-box/LRR-repeat protein R542.